We begin with the raw amino-acid sequence, 146 residues long: Large ribosomal subunit protein uL15 (146 aa).

The segment at 1–59 is disordered; it reads MRLEELKAPAGANKRTKRVGRGTGSGHGKTSTRGHKGQKSRSGGGVRPGFEGGQMPLQR. Over residues 30–39 the composition is skewed to basic residues; sequence TSTRGHKGQK. Over residues 42–52 the composition is skewed to gly residues; the sequence is SGGGVRPGFEG.

It belongs to the universal ribosomal protein uL15 family. As to quaternary structure, part of the 50S ribosomal subunit.

In terms of biological role, binds to the 23S rRNA. In Syntrophomonas wolfei subsp. wolfei (strain DSM 2245B / Goettingen), this protein is Large ribosomal subunit protein uL15.